A 378-amino-acid polypeptide reads, in one-letter code: Putative dioxygenase VC_1345 (378 aa).

Fe cation contacts are provided by H288, D294, and H324.

It belongs to the homogentisate dioxygenase family. Requires Fe cation as cofactor.

In Vibrio cholerae serotype O1 (strain ATCC 39315 / El Tor Inaba N16961), this protein is Putative dioxygenase VC_1345.